Consider the following 79-residue polypeptide: DNA-directed RNA polymerase subunit omega (79 aa).

It belongs to the RNA polymerase subunit omega family. As to quaternary structure, in cyanobacteria the RNAP catalytic core is composed of 2 alpha, 1 beta, 1 beta', 1 gamma and 1 omega subunit. When a sigma factor is associated with the core the holoenzyme is formed, which can initiate transcription.

It catalyses the reaction RNA(n) + a ribonucleoside 5'-triphosphate = RNA(n+1) + diphosphate. Promotes RNA polymerase assembly. Latches the N- and C-terminal regions of the beta' subunit thereby facilitating its interaction with the beta and alpha subunits. This chain is DNA-directed RNA polymerase subunit omega, found in Synechococcus sp. (strain JA-2-3B'a(2-13)) (Cyanobacteria bacterium Yellowstone B-Prime).